Consider the following 119-residue polypeptide: Beta-2-microglobulin (119 aa).

The signal sequence occupies residues 1 to 20 (MARFVVVPLLVLVSLFGLEA). One can recognise an Ig-like C1-type domain in the interval 25-114 (PKIQVYSRYP…VTFSTPKTVK (90 aa)). A disulfide bridge connects residues Cys45 and Cys100.

Belongs to the beta-2-microglobulin family. In terms of assembly, heterodimer of an alpha chain and a beta chain. Beta-2-microglobulin is the beta-chain of major histocompatibility complex class I molecules.

Its subcellular location is the secreted. In terms of biological role, component of the class I major histocompatibility complex (MHC). Involved in the presentation of peptide antigens to the immune system. This Saguinus oedipus (Cotton-top tamarin) protein is Beta-2-microglobulin (B2M).